Consider the following 221-residue polypeptide: Oxaloacetate tautomerase FAHD1, mitochondrial (221 aa).

The N-terminal 24 residues, 1–24 (MAASRPLSRFWEWGKNIVCVGRNY), are a transit peptide targeting the mitochondrion. A Phosphoserine modification is found at Ser-37. Glu-68, Glu-70, and Asp-99 together coordinate Mg(2+). Lys-110 is subject to N6-acetyllysine. Lys-112 carries the post-translational modification N6-succinyllysine.

The protein belongs to the FAH family. As to quaternary structure, homodimer. Mg(2+) serves as cofactor. Requires Mn(2+) as cofactor.

The protein localises to the mitochondrion. The protein resides in the cytoplasm. It localises to the cytosol. It catalyses the reaction oxaloacetate = enol-oxaloacetate. It carries out the reaction oxaloacetate + H(+) = pyruvate + CO2. The catalysed reaction is a 3-acylpyruvate + H2O = a carboxylate + pyruvate + H(+). The enzyme catalyses acetylpyruvate + H2O = acetate + pyruvate + H(+). It catalyses the reaction 3-fumarylpyruvate + H2O = fumarate + pyruvate + H(+). With respect to regulation, oxaloacetate decarboxylation is competitively inhibited by oxalate. Its function is as follows. Tautomerase that converts enol-oxaloacetate, a strong inhibitor of succinate dehydrogenase, to the physiological keto form of oxaloacetate. It is thereby required to maximize aerobic respiration efficiency by preventing succinate dehydrogenase inhibition. Also acts as a weak oxaloacetate decarboxylase (ODx), catalyzing the decarboxylation of oxaloacetate (OAA) to pyruvate and CO(2), and as such is likely a regulatory enzyme in the TCA cycle. Also displays acylpyruvase activity, being able to hydrolyze acetylpyruvate and fumarylpyruvate in vitro. This is Oxaloacetate tautomerase FAHD1, mitochondrial (FAHD1) from Pongo abelii (Sumatran orangutan).